The sequence spans 423 residues: Zinc finger and BTB domain-containing protein 6 (423 aa).

In terms of domain architecture, BTB spans 33 to 97 (CDVSIYINDT…CYTGALEVKR (65 aa)). Position 201 is a phosphoserine (S201). 4 C2H2-type zinc fingers span residues 300–322 (HQCP…LKMH), 325–347 (FLCL…IRGH), 353–375 (FQCT…LNIH), and 381–404 (YKCH…TSVH).

It is found in the nucleus. In terms of biological role, may be involved in transcriptional regulation. The protein is Zinc finger and BTB domain-containing protein 6 (Zbtb6) of Mus musculus (Mouse).